A 381-amino-acid chain; its full sequence is MYINYLKDLISFKSVTPKSDGAIEYINDLLKQHGFKTEIKIFGDSKSEQVTNLYAVFGSNEPNICFVGHVDVVLEGNHELWHNASPFKVSQQDGKIYGRGAVDMKGAIACFLAASLDFIKNNTDFKGSISFLLTSDEEGKAKHGTKEMLQYIYDQGYKINFAIVGEPTCEKEIGDAIKIGRRGSVNFKLNIEGLSGHVAYPHKANNPLPCLIIILNELTNIKLDEGTEFFQRSNLEVTNIEVSNNTSNVIPASTEASFNIRFNNLHSAETLAKQVEEIIKQHCKEYKVDYKLEYSSSAESFIQNPSDKIKEFAKVVEHTLKIKPEFSTSGGTSDARFVKNYCPLVEFGLLSETAHKINEYTKISDLQKLYDVYYNFLMEIL.

His69 is a binding site for Zn(2+). Asp71 is an active-site residue. Asp103 is a binding site for Zn(2+). The Proton acceptor role is filled by Glu137. Residues Glu138, Glu166, and His355 each contribute to the Zn(2+) site.

The protein belongs to the peptidase M20A family. DapE subfamily. In terms of assembly, homodimer. Zn(2+) is required as a cofactor. It depends on Co(2+) as a cofactor.

It carries out the reaction N-succinyl-(2S,6S)-2,6-diaminopimelate + H2O = (2S,6S)-2,6-diaminopimelate + succinate. The protein operates within amino-acid biosynthesis; L-lysine biosynthesis via DAP pathway; LL-2,6-diaminopimelate from (S)-tetrahydrodipicolinate (succinylase route): step 3/3. Functionally, catalyzes the hydrolysis of N-succinyl-L,L-diaminopimelic acid (SDAP), forming succinate and LL-2,6-diaminopimelate (DAP), an intermediate involved in the bacterial biosynthesis of lysine and meso-diaminopimelic acid, an essential component of bacterial cell walls. This chain is Succinyl-diaminopimelate desuccinylase, found in Rickettsia rickettsii (strain Iowa).